Reading from the N-terminus, the 501-residue chain is Cyclin-dependent kinase 19 (501 aa).

Residue Met-1 is modified to N-acetylmethionine. Positions 21-335 constitute a Protein kinase domain; it reads EYEGCKVGRG…SEQALQDPYF (315 aa). Residues 27–35 and Lys-52 contribute to the ATP site; that span reads VGRGTYGHV. The active-site Proton acceptor is the Asp-151. Positions 362-501 are disordered; that stretch reads DEPEEKGDKN…YHSSHQTHRY (140 aa). A compositionally biased stretch (low complexity) spans 371–392; it reads NQPQQQNPHQQPAAPAQQTAAP. A compositionally biased stretch (gly residues) spans 408 to 421; that stretch reads TAGGATAGGGGAGA. Position 449 is a phosphoserine (Ser-449). Residues 467–495 are compositionally biased toward low complexity; sequence YQSSVQGSSQSQSTLGYSSSQQSTQYHSS.

It belongs to the protein kinase superfamily. CMGC Ser/Thr protein kinase family. CDC2/CDKX subfamily.

It is found in the cytoplasm. The protein localises to the perinuclear region. The protein resides in the nucleus. The catalysed reaction is L-seryl-[protein] + ATP = O-phospho-L-seryl-[protein] + ADP + H(+). The enzyme catalyses L-threonyl-[protein] + ATP = O-phospho-L-threonyl-[protein] + ADP + H(+). The sequence is that of Cyclin-dependent kinase 19 (Cdk19) from Mus musculus (Mouse).